Here is a 129-residue protein sequence, read N- to C-terminus: Transcription antitermination protein NusB (129 aa).

It belongs to the NusB family.

Functionally, involved in transcription antitermination. Required for transcription of ribosomal RNA (rRNA) genes. Binds specifically to the boxA antiterminator sequence of the ribosomal RNA (rrn) operons. This Bacillus licheniformis (strain ATCC 14580 / DSM 13 / JCM 2505 / CCUG 7422 / NBRC 12200 / NCIMB 9375 / NCTC 10341 / NRRL NRS-1264 / Gibson 46) protein is Transcription antitermination protein NusB.